The sequence spans 88 residues: Small ribosomal subunit protein bS16c (88 aa).

The protein belongs to the bacterial ribosomal protein bS16 family.

It localises to the plastid. Its subcellular location is the chloroplast. This is Small ribosomal subunit protein bS16c from Jasminum nudiflorum (Winter jasmine).